The chain runs to 1145 residues: Structure-specific endonuclease subunit SLX4 (1145 aa).

The interval 48-108 (ADIPVQPDPP…GKSKQQPSIS (61 aa)) is disordered. Residues 321–372 (ERETQKCRQLRQQHELVYAELERYYGDPQKLEEEVMQELDELEKLVADNMIE) are a coiled coil. Residues 382–393 (EAESSSTGSSPS) are compositionally biased toward low complexity. 3 disordered regions span residues 382-442 (EAES…EDEP), 613-634 (QSSH…SSFS), and 666-689 (SAEK…DLTQ). Basic and acidic residues predominate over residues 395–410 (EPPDKRPKMTMEDKEN). Polar residues-rich tracts occupy residues 411-430 (LQPT…TRCT), 613-633 (QSSH…SSSF), and 678-689 (YKQSDASVDLTQ).

It belongs to the SLX4 family. In terms of assembly, forms a heterodimer with SLX1. Interacts with mei-9; catalytic subunit of the MEI-9-ERCC1 endonuclease.

The protein localises to the nucleus. Functionally, regulatory subunit that interacts with and increases the activity of different structure-specific endonucleases. Has several distinct roles in protecting genome stability by resolving diverse forms of deleterious DNA structures originating from replication and recombination intermediates and from DNA damage. Component of the SLX1-SLX4 structure-specific endonuclease that resolves DNA secondary structures generated during DNA repair and recombination. Has endonuclease activity towards branched DNA substrates, introducing single-strand cuts in duplex DNA close to junctions with ss-DNA. Interacts with the structure-specific MEI-9-ERCC1 endonuclease to generate meiotic crossovers. This chain is Structure-specific endonuclease subunit SLX4 (mus312), found in Drosophila melanogaster (Fruit fly).